A 267-amino-acid chain; its full sequence is Hydroxyethylthiazole kinase 2 (267 aa).

Residue Met-41 coordinates substrate. ATP is bound by residues Lys-116 and Thr-166. Gly-193 lines the substrate pocket.

It belongs to the Thz kinase family. The cofactor is Mg(2+).

The catalysed reaction is 5-(2-hydroxyethyl)-4-methylthiazole + ATP = 4-methyl-5-(2-phosphooxyethyl)-thiazole + ADP + H(+). It functions in the pathway cofactor biosynthesis; thiamine diphosphate biosynthesis; 4-methyl-5-(2-phosphoethyl)-thiazole from 5-(2-hydroxyethyl)-4-methylthiazole: step 1/1. In terms of biological role, catalyzes the phosphorylation of the hydroxyl group of 4-methyl-5-beta-hydroxyethylthiazole (THZ). In Streptococcus pneumoniae (strain Hungary19A-6), this protein is Hydroxyethylthiazole kinase 2.